Here is a 327-residue protein sequence, read N- to C-terminus: Trypsin-like protease try-5 (327 aa).

The N-terminal stretch at 1–21 is a signal peptide; sequence MRPRIIVFLFQVLVVIKGTKL. The Peptidase S1 domain occupies 43-327; that stretch reads AAGNTGNPTH…KFIVNFINQA (285 aa). Cys-73 and Cys-89 are oxidised to a cystine. Residues His-88 and Asp-173 each act as charge relay system in the active site. Residue Asn-207 is glycosylated (N-linked (GlcNAc...) asparagine). 2 cysteine pairs are disulfide-bonded: Cys-242–Cys-256 and Cys-266–Cys-296. The active-site Charge relay system is Ser-270.

The protein belongs to the peptidase S1 family. Specifically expressed in the male gonad including the seminal vesicle, the valve region and the vas deferens.

The protein localises to the secreted. It is found in the cytoplasmic vesicle. Its subcellular location is the secretory vesicle lumen. In the male gonad, probably maintained inactive by swm-1. Its function is as follows. Serine protease which, in males, acts as a promoting signal during mating to activate sperm. This Caenorhabditis elegans protein is Trypsin-like protease try-5.